The sequence spans 503 residues: Maturase K (503 aa).

The protein belongs to the intron maturase 2 family. MatK subfamily.

It localises to the plastid. The protein localises to the chloroplast. Functionally, usually encoded in the trnK tRNA gene intron. Probably assists in splicing its own and other chloroplast group II introns. In Liquidambar orientalis (Oriental sweet gum), this protein is Maturase K.